We begin with the raw amino-acid sequence, 199 residues long: Large ribosomal subunit protein bL25 (199 aa).

This sequence belongs to the bacterial ribosomal protein bL25 family. CTC subfamily. Part of the 50S ribosomal subunit; part of the 5S rRNA/L5/L18/L25 subcomplex. Contacts the 5S rRNA. Binds to the 5S rRNA independently of L5 and L18.

Functionally, this is one of the proteins that binds to the 5S RNA in the ribosome where it forms part of the central protuberance. The chain is Large ribosomal subunit protein bL25 from Pelobacter propionicus (strain DSM 2379 / NBRC 103807 / OttBd1).